The primary structure comprises 620 residues: Glutathione-regulated potassium-efflux system protein KefC (620 aa).

12 consecutive transmembrane segments (helical) span residues 4-24 (HTLIQALIYLGSAALIVPIAV), 26-46 (LGLGSVLGYLIAGCIIGPWGL), 54-74 (SILHFAEIGVVLMLFIIGLEL), 90-110 (GALQMVICGGLLGLFCMLLGL), 114-134 (VAELIGMTLALSSTAIAMQAM), 149-169 (FAVLLFQDIAAIPLVAMIPLL), 178-198 (MGAFALSALKVAGALVLVVLL), 218-238 (VFSAVALFLVFGFGLLLEEVG), 270-290 (GLLLGLFFIGVGMSIDFGTLI), 294-314 (LRIVILLLGFLIIKIAMLWLI), 327-347 (WFAVLLGQGSEFAFVVFGAAQ), and 359-379 (SLTLAVALSMAATPILLVILN). One can recognise an RCK N-terminal domain in the interval 399-518 (QPRVIIAGFG…AGVEKPERET (120 aa)). A disordered region spans residues 597–620 (GWQGTEEGKHTGNMADEPETKPSS).

The protein belongs to the monovalent cation:proton antiporter 2 (CPA2) transporter (TC 2.A.37) family. KefC subfamily. Homodimer. Interacts with the regulatory subunit KefF.

It localises to the cell inner membrane. Pore-forming subunit of a potassium efflux system that confers protection against electrophiles. Catalyzes K(+)/H(+) antiport. In Escherichia coli O17:K52:H18 (strain UMN026 / ExPEC), this protein is Glutathione-regulated potassium-efflux system protein KefC.